We begin with the raw amino-acid sequence, 534 residues long: Glucans biosynthesis protein D (534 aa).

The segment at residues Met1 to Ala28 is a signal peptide (tat-type signal).

The protein belongs to the OpgD/OpgG family. In terms of processing, predicted to be exported by the Tat system. The position of the signal peptide cleavage has not been experimentally proven.

The protein resides in the periplasm. It functions in the pathway glycan metabolism; osmoregulated periplasmic glucan (OPG) biosynthesis. Probably involved in the control of the structural glucose backbone of osmoregulated periplasmic glucans (OPGs). The protein is Glucans biosynthesis protein D of Xylella fastidiosa (strain M23).